We begin with the raw amino-acid sequence, 576 residues long: M-phase inducer phosphatase 2 (576 aa).

Ser-42 is subject to Phosphoserine. Residues 90–105 (RRTSECSLSSESSESS) show a composition bias toward low complexity. The interval 90–119 (RRTSECSLSSESSESSDAGLCMDSPSPVDP) is disordered. Residue Ser-167 is modified to Phosphoserine; by MELK. Ser-248 bears the Phosphoserine mark. At Ser-321 the chain carries Phosphoserine; by MELK and MAPK14. Residues 338-358 (QDRDVPVQSKRRKSVTPLEEQ) are disordered. Ser-351 is subject to Phosphoserine; by AURKA. Ser-372 bears the Phosphoserine; by BRSK1 and MAPK14 mark. The region spanning 427 to 534 (IVEKFVIVDC…FFPQHPNFCE (108 aa)) is the Rhodanese domain. Cys-483 is a catalytic residue. A Phosphoserine modification is found at Ser-559.

This sequence belongs to the MPI phosphatase family. Interacts with MAPK14 and 14-3-3 proteins. Post-translationally, phosphorylated by BRSK1 in vitro. Phosphorylated by CHEK1, which inhibits the activity of this protein. Phosphorylation at Ser-351 by AURKA might locally participate in the control of the onset of mitosis. Phosphorylation by MELK at Ser-167 promotes localization to the centrosome and the spindle poles during mitosis. Phosphorylation at Ser-321 and Ser-372 by MAPK14 is required for binding to 14-3-3 proteins. In terms of tissue distribution, expressed predominantly in spleen, lung, heart, brain, intestine, and muscle.

It is found in the cytoplasm. Its subcellular location is the cytoskeleton. The protein localises to the microtubule organizing center. The protein resides in the centrosome. It localises to the spindle pole. The catalysed reaction is O-phospho-L-tyrosyl-[protein] + H2O = L-tyrosyl-[protein] + phosphate. With respect to regulation, stimulated by B-type cyclins. Its function is as follows. Tyrosine protein phosphatase which functions as a dosage-dependent inducer of mitotic progression. Directly dephosphorylates CDK1 and stimulates its kinase activity. Required for G2/M phases of the cell cycle progression and abscission during cytokinesis in a ECT2-dependent manner. The three isoforms seem to have a different level of activity. The polypeptide is M-phase inducer phosphatase 2 (Cdc25b) (Mus musculus (Mouse)).